The sequence spans 248 residues: ATP synthase subunit a (248 aa).

The next 5 membrane-spanning stretches (helical) occupy residues 31-51 (GQVL…VILG), 90-110 (VPYV…GNLF), 129-149 (INTT…AGIS), 195-215 (VIAV…MVLF), and 216-236 (LFTG…YIGE).

This sequence belongs to the ATPase A chain family. In terms of assembly, F-type ATPases have 2 components, CF(1) - the catalytic core - and CF(0) - the membrane proton channel. CF(1) has five subunits: alpha(3), beta(3), gamma(1), delta(1), epsilon(1). CF(0) has four main subunits: a, b, b' and c.

It is found in the cellular thylakoid membrane. Key component of the proton channel; it plays a direct role in the translocation of protons across the membrane. This is ATP synthase subunit a from Synechococcus sp. (strain JA-2-3B'a(2-13)) (Cyanobacteria bacterium Yellowstone B-Prime).